We begin with the raw amino-acid sequence, 273 residues long: Energy-coupling factor transporter ATP-binding protein EcfA (273 aa).

The region spanning 2–237 (ISIRDLTYFY…RASLLALGLA (236 aa)) is the ABC transporter domain. 36-43 (GRNGSGKS) is an ATP binding site.

It belongs to the ABC transporter superfamily. Energy-coupling factor EcfA family. As to quaternary structure, forms a stable energy-coupling factor (ECF) transporter complex composed of 2 membrane-embedded substrate-binding proteins (S component), 2 ATP-binding proteins (A component) and 2 transmembrane proteins (T component).

The protein resides in the cell membrane. In terms of biological role, ATP-binding (A) component of a common energy-coupling factor (ECF) ABC-transporter complex. Unlike classic ABC transporters this ECF transporter provides the energy necessary to transport a number of different substrates. The protein is Energy-coupling factor transporter ATP-binding protein EcfA of Syntrophomonas wolfei subsp. wolfei (strain DSM 2245B / Goettingen).